A 496-amino-acid polypeptide reads, in one-letter code: Glutamyl-tRNA(Gln) amidotransferase subunit A (496 aa).

Residues lysine 75 and serine 150 each act as charge relay system in the active site. Serine 174 acts as the Acyl-ester intermediate in catalysis.

The protein belongs to the amidase family. GatA subfamily. In terms of assembly, heterotrimer of A, B and C subunits.

It carries out the reaction L-glutamyl-tRNA(Gln) + L-glutamine + ATP + H2O = L-glutaminyl-tRNA(Gln) + L-glutamate + ADP + phosphate + H(+). Functionally, allows the formation of correctly charged Gln-tRNA(Gln) through the transamidation of misacylated Glu-tRNA(Gln) in organisms which lack glutaminyl-tRNA synthetase. The reaction takes place in the presence of glutamine and ATP through an activated gamma-phospho-Glu-tRNA(Gln). This Burkholderia pseudomallei (strain 1106a) protein is Glutamyl-tRNA(Gln) amidotransferase subunit A.